A 188-amino-acid chain; its full sequence is Elongation factor P-like protein (188 aa).

This sequence belongs to the elongation factor P family.

The sequence is that of Elongation factor P-like protein from Xanthomonas euvesicatoria pv. vesicatoria (strain 85-10) (Xanthomonas campestris pv. vesicatoria).